The chain runs to 149 residues: Large ribosomal subunit protein uL13 (149 aa).

It belongs to the universal ribosomal protein uL13 family. As to quaternary structure, part of the 50S ribosomal subunit.

In terms of biological role, this protein is one of the early assembly proteins of the 50S ribosomal subunit, although it is not seen to bind rRNA by itself. It is important during the early stages of 50S assembly. This is Large ribosomal subunit protein uL13 from Thermosipho africanus (strain TCF52B).